The sequence spans 632 residues: Protein EAP1 (632 aa).

Disordered regions lie at residues 1 to 80 (MELN…KKNK), 149 to 204 (MGPP…DDEE), and 248 to 313 (KSKG…PSLS). Composition is skewed to polar residues over residues 7-38 (SIIS…SNLF) and 54-69 (VESS…ATSG). Ser30 is subject to Phosphoserine. Phosphoserine occurs at positions 281 and 282. Positions 288–298 (NLKRQDKKEES) are enriched in basic and acidic residues. A phosphoserine mark is found at Ser327 and Ser344. The segment at 347-378 (SLPSLDNNNQVPSSNVSVVNNDGNSTPHQSGS) is disordered. Over residues 353-371 (NNNQVPSSNVSVVNNDGNS) the composition is skewed to low complexity. The residue at position 387 (Ser387) is a Phosphoserine. Disordered regions lie at residues 429–541 (QHPP…PPPP) and 587–632 (QGNF…KNIK). Residue 440-447 (GLLNKGKS) participates in ATP binding. Residues 474–486 (PNFPQRMMPPPPG) show a composition bias toward pro residues. Positions 492–505 (KDSKDVNKKEDRQL) are enriched in basic and acidic residues. Composition is skewed to polar residues over residues 507–516 (QNKNPNGTRN), 590–603 (FPPN…SNSP), and 610–621 (INANGKNVTNQL).

In terms of assembly, interacts with SMY2, SYH1 and eIF4E.

The protein localises to the cytoplasm. Functionally, can regulate translation through binding to eIF4E. Competes with eIF4G and p20 for binding to eIF4E in vivo and inhibits cap-dependent translation in vitro. Plays a role in cell growth and is implicated in the TOR signaling cascade. Functions independently of eIF4E to maintain genetic stability and to attenuate GCN4 translation upon TOR inactivation. The sequence is that of Protein EAP1 (EAP1) from Saccharomyces cerevisiae (strain ATCC 204508 / S288c) (Baker's yeast).